Consider the following 359-residue polypeptide: Phosphate acyltransferase (359 aa).

Residues 335–359 (SGAGGAATGSPETDAPNPHPDSRAA) form a disordered region.

Belongs to the PlsX family. As to quaternary structure, homodimer. Probably interacts with PlsY.

The protein resides in the cytoplasm. It carries out the reaction a fatty acyl-[ACP] + phosphate = an acyl phosphate + holo-[ACP]. It participates in lipid metabolism; phospholipid metabolism. Its function is as follows. Catalyzes the reversible formation of acyl-phosphate (acyl-PO(4)) from acyl-[acyl-carrier-protein] (acyl-ACP). This enzyme utilizes acyl-ACP as fatty acyl donor, but not acyl-CoA. The polypeptide is Phosphate acyltransferase (Cupriavidus metallidurans (strain ATCC 43123 / DSM 2839 / NBRC 102507 / CH34) (Ralstonia metallidurans)).